The sequence spans 717 residues: Polyribonucleotide nucleotidyltransferase (717 aa).

Residues D486 and D492 each contribute to the Mg(2+) site. A KH domain is found at 553–612 (PKIVQLQIDIDKISLVIGSTGKTVKAITDEFEVRVQIEQDGRITLFGTDSLKMQKAKAKI). One can recognise an S1 motif domain in the interval 622–715 (GEIYDGIVKK…KFGKIELELV (94 aa)). Residues 659 to 689 (RYGDMRHSRYGSGRHSRYGRDNRNTFGMNPP) form a disordered region. Residues 666 to 675 (SRYGSGRHSR) show a composition bias toward basic residues.

Belongs to the polyribonucleotide nucleotidyltransferase family. Requires Mg(2+) as cofactor.

Its subcellular location is the cytoplasm. The catalysed reaction is RNA(n+1) + phosphate = RNA(n) + a ribonucleoside 5'-diphosphate. Its function is as follows. Involved in mRNA degradation. Catalyzes the phosphorolysis of single-stranded polyribonucleotides processively in the 3'- to 5'-direction. In Borrelia hermsii (strain HS1 / DAH), this protein is Polyribonucleotide nucleotidyltransferase.